We begin with the raw amino-acid sequence, 619 residues long: 1-deoxy-D-xylulose-5-phosphate synthase (619 aa).

Thiamine diphosphate contacts are provided by residues His-74 and 115-117 (GHS). Position 146 (Asp-146) interacts with Mg(2+). Residues 147-148 (GA), Asn-175, Tyr-285, and Glu-365 each bind thiamine diphosphate. Asn-175 contacts Mg(2+).

The protein belongs to the transketolase family. DXPS subfamily. As to quaternary structure, homodimer. Mg(2+) is required as a cofactor. The cofactor is thiamine diphosphate.

The catalysed reaction is D-glyceraldehyde 3-phosphate + pyruvate + H(+) = 1-deoxy-D-xylulose 5-phosphate + CO2. The protein operates within metabolic intermediate biosynthesis; 1-deoxy-D-xylulose 5-phosphate biosynthesis; 1-deoxy-D-xylulose 5-phosphate from D-glyceraldehyde 3-phosphate and pyruvate: step 1/1. Its function is as follows. Catalyzes the acyloin condensation reaction between C atoms 2 and 3 of pyruvate and glyceraldehyde 3-phosphate to yield 1-deoxy-D-xylulose-5-phosphate (DXP). This is 1-deoxy-D-xylulose-5-phosphate synthase from Clostridium perfringens (strain 13 / Type A).